Here is a 226-residue protein sequence, read N- to C-terminus: Probable septum site-determining protein MinC (226 aa).

It belongs to the MinC family. As to quaternary structure, interacts with MinD and FtsZ.

Cell division inhibitor that blocks the formation of polar Z ring septums. Rapidly oscillates between the poles of the cell to destabilize FtsZ filaments that have formed before they mature into polar Z rings. Prevents FtsZ polymerization. This is Probable septum site-determining protein MinC from Edwardsiella ictaluri (strain 93-146).